Here is a 235-residue protein sequence, read N- to C-terminus: Phosphoribosylaminoimidazole-succinocarboxamide synthase (235 aa).

It belongs to the SAICAR synthetase family.

The enzyme catalyses 5-amino-1-(5-phospho-D-ribosyl)imidazole-4-carboxylate + L-aspartate + ATP = (2S)-2-[5-amino-1-(5-phospho-beta-D-ribosyl)imidazole-4-carboxamido]succinate + ADP + phosphate + 2 H(+). Its pathway is purine metabolism; IMP biosynthesis via de novo pathway; 5-amino-1-(5-phospho-D-ribosyl)imidazole-4-carboxamide from 5-amino-1-(5-phospho-D-ribosyl)imidazole-4-carboxylate: step 1/2. In Streptococcus agalactiae serotype Ia (strain ATCC 27591 / A909 / CDC SS700), this protein is Phosphoribosylaminoimidazole-succinocarboxamide synthase.